The following is a 240-amino-acid chain: Protein GrpE (240 aa).

2 disordered regions span residues 1 to 54 (MSGD…NEAR) and 206 to 240 (VSMG…DGNG). Over residues 215–233 (GASSQPAEAPAADAPAEDS) the composition is skewed to low complexity.

Belongs to the GrpE family. Homodimer.

It is found in the cytoplasm. Its function is as follows. Participates actively in the response to hyperosmotic and heat shock by preventing the aggregation of stress-denatured proteins, in association with DnaK and GrpE. It is the nucleotide exchange factor for DnaK and may function as a thermosensor. Unfolded proteins bind initially to DnaJ; upon interaction with the DnaJ-bound protein, DnaK hydrolyzes its bound ATP, resulting in the formation of a stable complex. GrpE releases ADP from DnaK; ATP binding to DnaK triggers the release of the substrate protein, thus completing the reaction cycle. Several rounds of ATP-dependent interactions between DnaJ, DnaK and GrpE are required for fully efficient folding. In Synechococcus sp. (strain WH7803), this protein is Protein GrpE.